The primary structure comprises 212 residues: Glycerol-3-phosphate acyltransferase (212 aa).

5 consecutive transmembrane segments (helical) span residues 3-23 (ILLAALVAYLIGSVSFAVVVS), 51-71 (KAAILTLVGDAFKGWLAVWLA), 78-98 (DVAVAWVAIAVFLGHLYPVFF), 115-135 (AVHPVLGLATALTWLIVAFFF), and 139-159 (SLAALVAAVFAPLFDVFLFGT).

The protein belongs to the PlsY family. In terms of assembly, probably interacts with PlsX.

It is found in the cell inner membrane. The catalysed reaction is an acyl phosphate + sn-glycerol 3-phosphate = a 1-acyl-sn-glycero-3-phosphate + phosphate. It functions in the pathway lipid metabolism; phospholipid metabolism. In terms of biological role, catalyzes the transfer of an acyl group from acyl-phosphate (acyl-PO(4)) to glycerol-3-phosphate (G3P) to form lysophosphatidic acid (LPA). This enzyme utilizes acyl-phosphate as fatty acyl donor, but not acyl-CoA or acyl-ACP. The protein is Glycerol-3-phosphate acyltransferase of Burkholderia ambifaria (strain MC40-6).